The primary structure comprises 100 residues: Small ribosomal subunit protein bS20 (100 aa).

The protein belongs to the bacterial ribosomal protein bS20 family.

In terms of biological role, binds directly to 16S ribosomal RNA. This Prochlorococcus marinus (strain MIT 9211) protein is Small ribosomal subunit protein bS20.